The following is a 112-amino-acid chain: Small ribosomal subunit protein bS6 (112 aa).

The protein belongs to the bacterial ribosomal protein bS6 family.

Binds together with bS18 to 16S ribosomal RNA. The sequence is that of Small ribosomal subunit protein bS6 from Chlamydia trachomatis serovar L2 (strain ATCC VR-902B / DSM 19102 / 434/Bu).